Here is a 318-residue protein sequence, read N- to C-terminus: HPr kinase/phosphorylase (318 aa).

Active-site residues include H143 and K164. Residue 158–165 (GKSGVGKS) participates in ATP binding. S165 contributes to the Mg(2+) binding site. The Proton acceptor; for phosphorylation activity. Proton donor; for dephosphorylation activity role is filled by D182. Residues 206-215 (MEIRGLGILN) form an important for the catalytic mechanism of both phosphorylation and dephosphorylation region. E207 is a binding site for Mg(2+). Residue R248 is part of the active site. An important for the catalytic mechanism of dephosphorylation region spans residues 269 to 274 (PVKPGR).

This sequence belongs to the HPrK/P family. Homohexamer. It depends on Mg(2+) as a cofactor.

The enzyme catalyses [HPr protein]-L-serine + ATP = [HPr protein]-O-phospho-L-serine + ADP + H(+). The catalysed reaction is [HPr protein]-O-phospho-L-serine + phosphate + H(+) = [HPr protein]-L-serine + diphosphate. Its function is as follows. Catalyzes the ATP- as well as the pyrophosphate-dependent phosphorylation of a specific serine residue in HPr, a phosphocarrier protein of the phosphoenolpyruvate-dependent sugar phosphotransferase system (PTS). HprK/P also catalyzes the pyrophosphate-producing, inorganic phosphate-dependent dephosphorylation (phosphorolysis) of seryl-phosphorylated HPr (P-Ser-HPr). This Leptospira borgpetersenii serovar Hardjo-bovis (strain L550) protein is HPr kinase/phosphorylase.